The following is a 299-amino-acid chain: Very long chain fatty acid elongase 5 (299 aa).

The residue at position 1 (methionine 1) is an N-acetylmethionine. The next 6 membrane-spanning stretches (helical) occupy residues 26–46 (WFLL…LLIV), 64–84 (ILVV…CELV), 112–132 (VLRW…FFIL), 150–170 (MLNI…YFGA), 205–225 (GQLL…IWPC), and 226–246 (TFPL…IALF). Residues 275 to 299 (AAVNGHTNSFSPLENNVKPRKLRKD) are disordered. The span at 279–288 (GHTNSFSPLE) shows a compositional bias: polar residues. Position 285 is a phosphoserine (serine 285).

This sequence belongs to the ELO family. ELOVL5 subfamily. As to quaternary structure, interacts with TECR.

Its subcellular location is the endoplasmic reticulum membrane. It localises to the cell projection. It is found in the dendrite. It carries out the reaction a very-long-chain acyl-CoA + malonyl-CoA + H(+) = a very-long-chain 3-oxoacyl-CoA + CO2 + CoA. It catalyses the reaction (6Z,9Z,12Z)-octadecatrienoyl-CoA + malonyl-CoA + H(+) = (8Z,11Z,14Z)-3-oxoeicosatrienoyl-CoA + CO2 + CoA. The catalysed reaction is (9Z,12Z,15Z)-octadecatrienoyl-CoA + malonyl-CoA + H(+) = (11Z,14Z,17Z)-3-oxoeicosatrienoyl-CoA + CO2 + CoA. The enzyme catalyses (9Z)-hexadecenoyl-CoA + malonyl-CoA + H(+) = 3-oxo-(11Z)-octadecenoyl-CoA + CO2 + CoA. It carries out the reaction (9Z)-octadecenoyl-CoA + malonyl-CoA + H(+) = 3-oxo-(11Z)-eicosenoyl-CoA + CO2 + CoA. It catalyses the reaction (11Z)-octadecenoyl-CoA + malonyl-CoA + H(+) = 3-oxo-(13Z)-eicosenoyl-CoA + CO2 + CoA. The catalysed reaction is (9Z,12Z)-octadecadienoyl-CoA + malonyl-CoA + H(+) = (11Z,14Z)-3-oxoicosa-11,14-dienoyl-CoA + CO2 + CoA. The enzyme catalyses (6Z,9Z,12Z,15Z)-octadecatetraenoyl-CoA + malonyl-CoA + H(+) = (8Z,11Z,14Z,17Z)-3-oxoicosatetraenoyl-CoA + CO2 + CoA. It carries out the reaction (5Z,8Z,11Z,14Z)-eicosatetraenoyl-CoA + malonyl-CoA + H(+) = (7Z,10Z,13Z,16Z)-3-oxodocosatetraenoyl-CoA + CO2 + CoA. It catalyses the reaction (5Z,8Z,11Z,14Z,17Z)-eicosapentaenoyl-CoA + malonyl-CoA + H(+) = 3-oxo-(7Z,10Z,13Z,16Z,19Z)-docosapentaenoyl-CoA + CO2 + CoA. It participates in lipid metabolism; polyunsaturated fatty acid biosynthesis. Functionally, catalyzes the first and rate-limiting reaction of the four reactions that constitute the long-chain fatty acids elongation cycle. This endoplasmic reticulum-bound enzymatic process allows the addition of 2 carbons to the chain of long- and very long-chain fatty acids (VLCFAs) per cycle. Condensing enzyme that acts specifically toward polyunsaturated acyl-CoA with the higher activity toward C18:3(n-6) acyl-CoA. May participate in the production of monounsaturated and of polyunsaturated VLCFAs of different chain lengths that are involved in multiple biological processes as precursors of membrane lipids and lipid mediators. In conditions where the essential linoleic and alpha linoleic fatty acids are lacking it is also involved in the synthesis of Mead acid from oleic acid. The polypeptide is Very long chain fatty acid elongase 5 (Macaca fascicularis (Crab-eating macaque)).